The sequence spans 313 residues: Acetaldehyde dehydrogenase (313 aa).

13 to 16 contributes to the NAD(+) binding site; that stretch reads SGNI. Cys133 functions as the Acyl-thioester intermediate in the catalytic mechanism. NAD(+)-binding positions include 164–172 and Asn291; that span reads SAGPGTRAN.

This sequence belongs to the acetaldehyde dehydrogenase family.

The catalysed reaction is acetaldehyde + NAD(+) + CoA = acetyl-CoA + NADH + H(+). The protein is Acetaldehyde dehydrogenase of Cupriavidus pinatubonensis (strain JMP 134 / LMG 1197) (Cupriavidus necator (strain JMP 134)).